The chain runs to 399 residues: Methylthioribose kinase (399 aa).

ATP contacts are provided by residues Asn40, Lys57, and 111 to 113 (EDL). Asp229 serves as a coordination point for substrate. Residue 246 to 248 (DAE) coordinates ATP. Residue Arg344 participates in substrate binding.

The protein belongs to the methylthioribose kinase family. In terms of assembly, homodimer.

The enzyme catalyses 5-(methylsulfanyl)-D-ribose + ATP = 5-(methylsulfanyl)-alpha-D-ribose 1-phosphate + ADP + H(+). It functions in the pathway amino-acid biosynthesis; L-methionine biosynthesis via salvage pathway; S-methyl-5-thio-alpha-D-ribose 1-phosphate from S-methyl-5'-thioadenosine (hydrolase route): step 2/2. In terms of biological role, catalyzes the phosphorylation of methylthioribose into methylthioribose-1-phosphate. This Yersinia enterocolitica serotype O:8 / biotype 1B (strain NCTC 13174 / 8081) protein is Methylthioribose kinase.